The sequence spans 155 residues: Endoribonuclease YbeY (155 aa).

3 residues coordinate Zn(2+): histidine 116, histidine 120, and histidine 126.

The protein belongs to the endoribonuclease YbeY family. Zn(2+) is required as a cofactor.

It localises to the cytoplasm. Its function is as follows. Single strand-specific metallo-endoribonuclease involved in late-stage 70S ribosome quality control and in maturation of the 3' terminus of the 16S rRNA. This Colwellia psychrerythraea (strain 34H / ATCC BAA-681) (Vibrio psychroerythus) protein is Endoribonuclease YbeY.